A 193-amino-acid chain; its full sequence is 3-isopropylmalate dehydratase small subunit (193 aa).

Belongs to the LeuD family. LeuD type 1 subfamily. Heterodimer of LeuC and LeuD.

The catalysed reaction is (2R,3S)-3-isopropylmalate = (2S)-2-isopropylmalate. Its pathway is amino-acid biosynthesis; L-leucine biosynthesis; L-leucine from 3-methyl-2-oxobutanoate: step 2/4. In terms of biological role, catalyzes the isomerization between 2-isopropylmalate and 3-isopropylmalate, via the formation of 2-isopropylmaleate. This Bacillus cereus (strain 03BB102) protein is 3-isopropylmalate dehydratase small subunit.